An 84-amino-acid chain; its full sequence is uncharacterized protein (84 aa).

Low complexity predominate over residues 34–54; the sequence is ATSTASSSAAKNTTSSSKNAA. The tract at residues 34–57 is disordered; that stretch reads ATSTASSSAAKNTTSSSKNAAPGM. N-linked (GlcNAc...) asparagine glycosylation occurs at asparagine 45. The chain crosses the membrane as a helical span at residues 66-83; the sequence is YGIIMAAFAAVSFVLGTG.

Its subcellular location is the endoplasmic reticulum membrane. This is an uncharacterized protein from Saccharomyces cerevisiae (strain ATCC 204508 / S288c) (Baker's yeast).